Here is a 400-residue protein sequence, read N- to C-terminus: Aminomethyltransferase, mitochondrial (400 aa).

3 residues coordinate substrate: Glu-221, Arg-250, and Tyr-397.

The protein belongs to the GcvT family. In terms of assembly, component of the glycine decarboxylase complex (GDC), which is composed of four proteins: P, T, L and H.

The protein resides in the mitochondrion. It carries out the reaction N(6)-[(R)-S(8)-aminomethyldihydrolipoyl]-L-lysyl-[protein] + (6S)-5,6,7,8-tetrahydrofolate = N(6)-[(R)-dihydrolipoyl]-L-lysyl-[protein] + (6R)-5,10-methylene-5,6,7,8-tetrahydrofolate + NH4(+). Its function is as follows. The glycine cleavage system (glycine decarboxylase complex) catalyzes the degradation of glycine. This chain is Aminomethyltransferase, mitochondrial (GCV1), found in Saccharomyces cerevisiae (strain ATCC 204508 / S288c) (Baker's yeast).